We begin with the raw amino-acid sequence, 295 residues long: Elongation factor Ts (295 aa).

The interval 79-82 (TDFV) is involved in Mg(2+) ion dislocation from EF-Tu.

It belongs to the EF-Ts family.

The protein localises to the cytoplasm. Associates with the EF-Tu.GDP complex and induces the exchange of GDP to GTP. It remains bound to the aminoacyl-tRNA.EF-Tu.GTP complex up to the GTP hydrolysis stage on the ribosome. The polypeptide is Elongation factor Ts (Bacillus cereus (strain ATCC 10987 / NRS 248)).